The chain runs to 398 residues: Ras-related GTP-binding protein C (398 aa).

Positions 1 to 56 (MSLQYGAEETPLAGSYGAADSFPKDFGYGVEEEEEEAAAGGGGGAGAGGGCGPGGA) are disordered. Ser2 bears the N-acetylserine mark. 2 positions are modified to phosphoserine: Ser2 and Ser15. Residues 39-55 (AGGGGGAGAGGGCGPGG) show a composition bias toward gly residues. The GDP site is built by Arg70, Ser71, Gly72, Lys73, Ser74, and Ser75. A GTP-binding site is contributed by Lys73. GTP is bound by residues Thr89 and Thr95. Thr95 carries the phosphothreonine modification. The GDP site is built by His177, Lys178, Asp180, and Ile219. Position 180 (Asp180) interacts with GTP.

This sequence belongs to the GTR/RAG GTP-binding protein family. In terms of assembly, forms a heterodimer with RRAGA, in a sequence-independent manner, and RRAGB. Heterodimerization stabilizes proteins of the heterodimer. The GDP-bound form of RRAGC (in complex with the GTP-bound form of RRAGA or RRAGB), interacts with RPTOR, thereby promoting recruitment of mTORC1 to the lysosomes. Component of the lysosomal folliculin complex (LFC), composed of FLCN, FNIP1 (or FNIP2), RagA/RRAGA or RagB/RRAGB GDP-bound, RagC/RRAGC or RagD/RRAGD GTP-bound, and Ragulator. Interacts with NOL8. Interacts with SH3BP4; the interaction with this negative regulator is most probably direct, preferentially occurs with the inactive GDP-bound form of RRAGB, is negatively regulated by amino acids and prevents interaction with RPTOR. The Rag heterodimer interacts with SLC38A9; the probable amino acid sensor. Interacts with SESN1, SESN2 and SESN3. Interacts with PIP4P1. The GDP-bound form interacts with TFEB. The GDP-bound form interacts with TFE3. In terms of tissue distribution, expressed most abundantly in kidney. Moderately expressed in brain, ovary, and testis, and detected at lower levels in heart, liver, and muscle. Not detected in lung, spleen, and small intestine. Widely expressed in tumor cells, with expression being specifically up-regulated in highly metastatic cells.

The protein resides in the cytoplasm. It is found in the nucleus. The protein localises to the lysosome membrane. It carries out the reaction GTP + H2O = GDP + phosphate + H(+). With respect to regulation, the activation of RagC/RRAGC is mediated by a GTPase activating protein (GAP). In high-amino acid conditions, activated by GTPase activating protein FLCN that stimulates RRAGC GTPase activity to turn it into its active GDP-bound form. In response to amino acid depletion, the GATOR1 complex inactivates RagC/RRAGC by securing the GTP-bound inactive form. Guanine nucleotide-binding protein that plays a crucial role in the cellular response to amino acid availability through regulation of the mTORC1 signaling cascade. Forms heterodimeric Rag complexes with RagA/RRAGA or RagB/RRAGB and cycles between an inactive GTP-bound and an active GDP-bound form: RagC/RRAGC is in its active form when GDP-bound RagC/RRAGC forms a complex with GTP-bound RagA/RRAGA (or RagB/RRAGB) and in an inactive form when GTP-bound RagC/RRAGC heterodimerizes with GDP-bound RagA/RRAGA (or RagB/RRAGB). In its GDP-bound active form, promotes the recruitment of mTORC1 to the lysosomes and its subsequent activation by the GTPase RHEB. This is a crucial step in the activation of the MTOR signaling cascade by amino acids. Also plays a central role in the non-canonical mTORC1 complex, which acts independently of RHEB and specifically mediates phosphorylation of MiT/TFE factors TFEB and TFE3: GDP-bound RagC/RRAGC mediates recruitment of MiT/TFE factors TFEB and TFE3. The chain is Ras-related GTP-binding protein C from Mus musculus (Mouse).